The sequence spans 174 residues: Co-chaperone protein HscB (174 aa).

Residues 2–74 (NYFTLFDLPR…LNRAIYFLCL (73 aa)) form the J domain.

The protein belongs to the HscB family. Interacts with HscA and stimulates its ATPase activity. Interacts with IscU.

Its function is as follows. Co-chaperone involved in the maturation of iron-sulfur cluster-containing proteins. Seems to help targeting proteins to be folded toward HscA. This chain is Co-chaperone protein HscB, found in Buchnera aphidicola subsp. Acyrthosiphon pisum (strain Tuc7).